A 1096-amino-acid polypeptide reads, in one-letter code: Centrosome-associated zinc finger protein Cp190 (1096 aa).

The tract at residues 1 to 209 is involved in microtubule and centrosome binding; the sequence is MGEVKSVKVD…GDSSNVKQEP (209 aa). Residues 30 to 97 enclose the BTB domain; sequence CDLTLQFRDN…MYTGTLEFEL (68 aa). Positions 126 to 308 are disordered; sequence MENVNRQQRP…PQGTQTQLEH (183 aa). Composition is skewed to polar residues over residues 175-213 and 220-230; these read RANTQRGSTGNTMSRTSGGSNRSPYGDSSNVKQEPTSPF and YNNNKRPAQTS. Phosphoserine is present on residues S197 and S211. The segment at 207–271 is nuclear localization; it reads QEPTSPFEQL…GDNDPEYDGG (65 aa). Residues 210–245 are involved in interaction with cliff; that stretch reads TSPFEQLRKGYNNNKRPAQTSLLSPPSKKPSLEEVK. A Phosphothreonine modification is found at T229. S233 carries the phosphoserine modification. Residues 239–252 are compositionally biased toward basic and acidic residues; the sequence is PSLEEVKEFAEQQR. Positions 245-468 are centrosomal targeting M domain involved in interaction with ZIPIC; the sequence is KEFAEQQRMR…IAQGAENTTG (224 aa). Residues 292 to 305 show a composition bias toward low complexity; the sequence is STSKQQSPQGTQTQ. Phosphoserine occurs at positions 298 and 319. Residues 309–390 form an involved in interaction with cliff region; the sequence is GSTTIILKQD…KPPANQSSAT (82 aa). The tract at residues 366-449 is disordered; that stretch reads NTPAAPTEKS…ANTAAAQKRR (84 aa). The tract at residues 385–508 is centrosomal localization and interaction with microtubules; the sequence is NQSSATTSPH…KETIDPALCE (124 aa). The span at 412-445 shows a compositional bias: low complexity; sequence AQQKAASSQQKSGTSQTTGNQGTGANPPANTAAA. C2H2-type zinc fingers lie at residues 538–561 and 567–590; these read AECALCNQSYRTKGELEAHINEVH and QQCIYCNKVFEQELQLYRHMKSYH. T603 carries the post-translational modification Phosphothreonine. The span at 608–625 shows a compositional bias: acidic residues; it reads LGSQDEEEEAEGDEEQEP. Residues 608-630 are disordered; sequence LGSQDEEEEAEGDEEQEPEQTGK. 3 positions are modified to phosphoserine: S610, S708, and S723. The tract at residues 710–733 is disordered; that stretch reads PEAEHVKQETDEKSLAGTEEEYDD. Positions 711–723 are enriched in basic and acidic residues; the sequence is EAEHVKQETDEKS. The residue at position 727 (T727) is a Phosphothreonine. S745, S748, S757, and S760 each carry phosphoserine. The disordered stretch occupies residues 770–927; that stretch reads LIAESEEQSN…EDSPIPHSDS (158 aa). Over residues 777–799 the composition is skewed to basic and acidic residues; the sequence is QSNKEPKSDKPRDDISEKLKELT. A compositionally biased stretch (acidic residues) spans 802–812; the sequence is WTEDENDDDVD. Position 817 is a phosphothreonine (T817). Composition is skewed to basic and acidic residues over residues 825 to 834, 849 to 861, 882 to 907, and 914 to 927; these read ANKDPEPTVH, KGPEEATEEKASE, EKMDVDSEAADEKASKAEVQIKKEAE, and EFIKEDSPIPHSDS. Phosphoserine occurs at positions 920, 925, and 927. At T936 the chain carries Phosphothreonine. S938 carries the post-translational modification Phosphoserine. Basic and acidic residues-rich tracts occupy residues 960-973 and 1011-1035; these read IAEAEKPDQEKDIV and AAEKAAENNEDTRTADEKEAVEDKP. The interval 960 to 1096 is disordered; it reads IAEAEKPDQE…GVSAAAKEEL (137 aa). S1071 and S1074 each carry phosphoserine. Residues 1076–1086 show a composition bias toward acidic residues; the sequence is WGDDDEDEDEN.

As to quaternary structure, homodimerizes via the N-terminal BTB domain. Component of the gypsy chromatin insulator complex, composed of Cp190, mod(mdg4) and su(Hw). The gypsy chromatin insulator complex interacts with Topors via mod(mdg4) and su(Hw). Interacts with Cp60. Interacts with inv. Interacts with Nup98. Interacts (via BTB domain) with pita (via region between the ZAD domain and the first zinc finger domain); the interaction is direct. Interacts with ZIPIC (via region between the ZAD domain and the first zinc finger domain); the interaction is direct. Interacts (via regions between the BTB domain and first zinc finger domain) with cliff (via regions flanking MADF domain 1); the interaction is probably direct. Associates (via N-terminus) with microtubules; the interaction is direct, is enhanced by dimerization and involves multiple regions within the N-terminus. Microtubule association is enriched at growing plus ends. In terms of tissue distribution, expressed in spermatids but not in mature spermatozoa. Localizes within the spermatids to a sheath of microtubules around the nucleus and to microtubules within the tail.

Its subcellular location is the nucleus. It localises to the cytoplasm. It is found in the cytoskeleton. The protein resides in the microtubule organizing center. The protein localises to the centrosome. Its subcellular location is the chromosome. It localises to the nucleoplasm. Functionally, plays a central role in chromatin domain organization and boundary function through recruitment by a range of insulator DNA-binding proteins, including ZIPIC, pita, CTCF, su(Hw), cliff and others. Together with pita and CTCF cooperatively binds to and regulates the activity of the Miscadastral pigmentation (MCP) insulator. Cooperatively recruited to the front-ultraabdominal (Fub) boundary by pita, su(Hw) and cliff. Recruitment of Cp190 together with Chro/chromator induces chromatin decondensation. Component of the gypsy chromatin insulator complex which is required for the function of the gypsy chromatin insulator and other endogenous chromatin insulators. Chromatin insulators are regulatory elements that establish independent domains of transcriptional activity within eukaryotic genomes. Insulators have two defining properties; they can block the communication between an enhancer and a promoter when placed between them and can also buffer transgenes from position effect variegation (PEV). Insulators are proposed to structure the chromatin fiber into independent domains of differing transcriptional potential by promoting the formation of distinct chromatin loops to form topologically associating domains (TADs). This chromatin looping may involve the formation of insulator bodies, where homotypic interactions between individual subunits of the insulator complex could promote the clustering of widely spaced insulators at the nuclear periphery. Within the gypsy insulator complex, this protein may directly bind to insulator DNA at sites distinct from those recognized by su(Hw). Required during embryogenesis for axial expansion, an actin/myosin dependent process that distributes the dividing nuclei along the anterior-posterior axis of the syncytial embryo. Associates with centrosomes and interphase microtubules during mitosis, and recruits CP60; may have a role in maintaining centrosome and spindle integrity. This is Centrosome-associated zinc finger protein Cp190 from Drosophila melanogaster (Fruit fly).